The chain runs to 373 residues: MFECTHCDLHFESKSKLATHQKTKKCTAHRFLGFTCQKCWDHVKGYENALNHVAKCGQKLQTFEGIQALVAQLALHYKCEVVFDHENGKGQINFQKVFNYTHPSNLQEMREPIEPRSMHVWYKMLRKYSDQYLLGGHGLYLNDINYTLFRLSDAFKFLAAKYDARTLLKMLWIEPTYKLFHVKDGIVYVLGKIQSQTQEGRKWFGDTFCLQRNETIVKCLWYRDPTLEQLWSNTIPLLKEILNLYLDLGTWLLKRKNIKLKNDHKIHHNCKTIIENVFKEYDVTNLIENITVLNSRQTFTTMFREILTQHQKDLRLPSNIHHVFKDDLLPSSLGGQEFSLMTMTEQKISGGNQYHLMYHILPESERPMFETKI.

A C2H2-type zinc finger spans residues 2–29 (FECTHCDLHFESKSKLATHQKTKKCTAH).

Belongs to the IIV-6 302L family.

The polypeptide is Putative zinc finger protein 012R (Invertebrate iridescent virus 3 (IIV-3)).